The primary structure comprises 229 residues: Potassium/proton antiporter CemA (229 aa).

Helical transmembrane passes span 7–27 (FSPIFHLSFIVFLPWGIYLSF), 106–126 (MILRLSTNLICVVIISGFYIW), and 189–209 (IISGLVSTFPVILDTIFKYWI).

This sequence belongs to the CemA family.

The protein resides in the plastid membrane. It carries out the reaction K(+)(in) + H(+)(out) = K(+)(out) + H(+)(in). May be involved in proton extrusion. This Cuscuta reflexa (Southern Asian dodder) protein is Potassium/proton antiporter CemA.